We begin with the raw amino-acid sequence, 2465 residues long: Protein DOP1A (2465 aa).

Disordered stretches follow at residues 559 to 600 (PSGQ…SSES), 625 to 646 (GAAAIPIGSTSSETETASTVGS), and 705 to 733 (TEHQGDLGREQGETSKWDRNSQGDVKEKN). Residues 633–646 (STSSETETASTVGS) show a composition bias toward low complexity. Positions 707–733 (HQGDLGREQGETSKWDRNSQGDVKEKN) are enriched in basic and acidic residues. S1266 bears the Phosphoserine mark. 2 stretches are compositionally biased toward basic and acidic residues: residues 1282-1291 (EKETIVKESG) and 1305-1315 (KKDDDKKKSSN). The disordered stretch occupies residues 1282–1315 (EKETIVKESGKQPGAKPKVKLARKKDDDKKKSSN).

The protein belongs to the DOP1 family.

The protein resides in the golgi apparatus membrane. In terms of biological role, may be involved in protein traffic between late Golgi and early endosomes. The chain is Protein DOP1A from Homo sapiens (Human).